A 296-amino-acid polypeptide reads, in one-letter code: CCAAT/enhancer-binding protein beta (296 aa).

Positions 1–22 are required for Lys-133 sumoylation; sequence MHRLLAWDAACLPPPPAAFRPM. The residue at position 3 (R3) is an Asymmetric dimethylarginine; by CARM1. Residues 22 to 104 are required for MYC transcriptional repression; sequence MEVANFYYEP…YGAKPSKKPA (83 aa). At K39 the chain carries N6-acetyllysine; alternate. K39 bears the N6-methylated lysine; alternate mark. An N6-acetyllysine; by KAT2A and KAT2B mark is found at K98 and K101. N6-acetyllysine; by KAT2A and KAT2B; alternate is present on K102. Glycyl lysine isopeptide (Lys-Gly) (interchain with G-Cter in SUMO2); alternate cross-links involve residues K102 and K133. K133 is covalently cross-linked (Glycyl lysine isopeptide (Lys-Gly) (interchain with G-Cter in SUMO); alternate). K144 participates in a covalent cross-link: Glycyl lysine isopeptide (Lys-Gly) (interchain with G-Cter in SUMO2). A disordered region spans residues 171–199; the sequence is SGSSGSLSTSSSSSPPGTPSPADAKAAPA. Residue T179 is modified to Phosphothreonine; by GSK3-beta. O-linked (GlcNAc) serine glycosylation is found at S180 and S181. The residue at position 184 (S184) is a Phosphoserine; by GSK3-beta. The residue at position 188 (T188) is a Phosphothreonine; by RPS6KA1, CDK2 and MAPK. Residues K211 and K213 each participate in a glycyl lysine isopeptide (Lys-Gly) (interchain with G-Cter in SUMO2) cross-link. T217 carries the post-translational modification Phosphothreonine; by RPS6KA1 and PKC/PRKCA. The bZIP domain maps to 222–285; the sequence is SDEYKMRRER…STLRNLFKQL (64 aa). The tract at residues 226–246 is basic motif; it reads KMRRERNNIAVRKSRDKAKMR. Phosphoserine; by PKC/PRKCA is present on S239. Residues 248-255 are leucine-zipper; that stretch reads LETQHKVL. A Phosphoserine; by CaMK2 modification is found at S276. K283 participates in a covalent cross-link: Glycyl lysine isopeptide (Lys-Gly) (interchain with G-Cter in SUMO2).

It belongs to the bZIP family. C/EBP subfamily. As to quaternary structure, binds DNA as a homodimer and as a heterodimer. Interacts with ATF4. Binds DNA as a heterodimer with ATF4. Interacts with MYB; within the complex, MYB and CEBPB bind to different promoter regions. Can form stable heterodimers with CEBPA, CEBPD and CEBPE. Interacts with SIX1. Isoform 2 and isoform 3 also form heterodimers. Interacts with TRIM28 and PTGES2. Interacts with PRDM16. Interacts with CCDC85B. Forms a complex with THOC5. Interacts with ZNF638; this interaction increases transcriptional activation. Interacts with CIDEA and CIDEC. Interaction with CIDEA increases transcriptional activation of a subset of CEBPB downstream target genes, including ID2, IGF1, PRLR, SOCS1, SOCS3, XDH. Interaction with CIDEC increases transcriptional activation of SOCS1, SOCS3, TGFB1, TGFBR1, ID2 and XDH. Interacts with DDIT3/CHOP. Interacts with EP300; recruits EP300 to chromatin. Interacts with RORA; the interaction disrupts interaction with EP300. Interacts (not methylated) with MED23, MED26, SMARCA2, SMARCB1 and SMARCC1. Interacts with KAT2A and KAT2B. Interacts with ATF5; EP300 is required for ATF5 and CEBPB interaction and DNA binding. Interacts with NFE2L1; the heterodimer represses expression of DSPP during odontoblast differentiation. Post-translationally, sumoylated by polymeric chains of SUMO2 or SUMO3. Sumoylation at Lys-133 is required for inhibition of T-cells proliferation. In adipocytes, sumoylation at Lys-133 by PIAS1 leads to ubiquitination and subsequent proteasomal degradation. Desumoylated by SENP2, which abolishes ubiquitination and stabilizes protein levels. Ubiquitinated, leading to proteasomal degradation. In terms of processing, phosphorylated at Thr-188 by MAPK and CDK2, serves to prime phosphorylation at Thr-179 and Ser-184 by GSK3B and acquire DNA-binding as well as transactivation activities, required to induce adipogenesis. MAPK and CDK2 act sequentially to maintain Thr-188 in the primed phosphorylated state during mitotical cloning expansion and thereby progression of terminal differentiation. Phosphorylation at Thr-217 enhances transactivation activity. Phosphorylation at Ser-276 in response to calcium increases transactivation activity. Phosphorylated at Thr-188 by RPS6KA1. Post-translationally, O-glycosylated, glycosylation at Ser-180 and Ser-181 prevents phosphorylation on Thr-188, Ser-184 and Thr-179 and DNA binding activity which delays the adipocyte differentiation program. Acetylated. Acetylation at Lys-39 is an important and dynamic regulatory event that contributes to its ability to transactivate target genes, including those associated with adipogenesis and adipocyte function. Deacetylation by HDAC1 represses its transactivation activity. Acetylated by KAT2A and KAT2B within a cluster of lysine residues between amino acids 98-102, this acetylation is strongly induced by glucocorticoid treatment and enhances transactivation activity. In terms of processing, methylated. Methylation at Arg-3 by CARM1 and at Lys-39 by EHMT2, inhibits transactivation activity. Methylation is probably inhibited by phosphorylation at Thr-188. In terms of tissue distribution, abundantly expressed in myoblasts. Enriched in brown adipose tissue (BAT) versus white adipose tissue (WAT). Expressed in hepatocytes (at protein level). Expressed in T lymphocytes. The expression in granulosa cells of antral follicles is induced by luteinizing hormone. Expressed in chondrocytes and osteoblasts (at protein level).

It localises to the nucleus. The protein localises to the cytoplasm. Its function is as follows. Important transcription factor regulating the expression of genes involved in immune and inflammatory responses. Also plays a significant role in adipogenesis, as well as in the gluconeogenic pathway, liver regeneration, and hematopoiesis. The consensus recognition site is 5'-T[TG]NNGNAA[TG]-3'. Its functional capacity is governed by protein interactions and post-translational protein modifications. During early embryogenesis, plays essential and redundant roles with CEBPA. Has a promitotic effect on many cell types such as hepatocytes and adipocytes but has an antiproliferative effect on T-cells by repressing MYC expression, facilitating differentiation along the T-helper 2 lineage. Binds to regulatory regions of several acute-phase and cytokines genes and plays a role in the regulation of acute-phase reaction and inflammation. Also plays a role in intracellular bacteria killing. During adipogenesis, is rapidly expressed and, after activation by phosphorylation, induces CEBPA and PPARG, which turn on the series of adipocyte genes that give rise to the adipocyte phenotype. The delayed transactivation of the CEBPA and PPARG genes by CEBPB appears necessary to allow mitotic clonal expansion and thereby progression of terminal differentiation. Essential for female reproduction because of a critical role in ovarian follicle development. Restricts osteoclastogenesis. Together with NFE2L1; represses expression of DSPP during odontoblast differentiation. Functionally, essential for gene expression induction in activated macrophages. Plays a major role in immune responses such as CD4(+) T-cell response, granuloma formation and endotoxin shock. Not essential for intracellular bacteria killing. Acts as a dominant negative through heterodimerization with isoform 2. Promotes osteoblast differentiation and osteoclastogenesis. The chain is CCAAT/enhancer-binding protein beta from Mus musculus (Mouse).